Reading from the N-terminus, the 227-residue chain is MPENPSSSPTEPPEQSAAFEKWRSGLAQFTGLGLSESEKAERERLKAQGKLAKDWDKCEGWKRDLMNYSPMITFLLNHLKLAGCPFPSSAMQCHPCPENRAGGFSPDHGILLCQDRFFNKKHMEDTLAHELVHAFDHCRFKVDWGNLRHHACSEIRAANLSGDCRFTREVKRGFYAFNKQHQACVKRRAILSVLANPACTSPEMAEKAVNEVWESCFTDTRPFDEIY.

His-129 lines the a divalent metal cation pocket. Glu-130 is a catalytic residue. His-133 contributes to the a divalent metal cation binding site.

The protein belongs to the peptidase M76 family.

Its subcellular location is the mitochondrion inner membrane. Has a dual role in the assembly of mitochondrial ATPase. Acts as a protease that removes N-terminal residues of mitochondrial ATPase CF(0) subunit 6 at the intermembrane space side. Also involved in the correct assembly of the membrane-embedded ATPase CF(0) particle, probably mediating association of subunit 6 with the subunit 9 ring. The chain is Mitochondrial inner membrane protease ATP23 (ATP23) from Cryptococcus neoformans var. neoformans serotype D (strain JEC21 / ATCC MYA-565) (Filobasidiella neoformans).